The chain runs to 206 residues: KH domain-containing protein 3 (206 aa).

The tract at residues 1-40 (MDTPRRFPTLVQLMQPKAMPVEVLGHLPKRFSWFHSEFLK) is involved in RNA binding. The region spanning 40–103 (KNPKVVRLEV…SYQEDTIKMI (64 aa)) is the KH; atypical domain. Residues 144–153 (GTQRSVEVRE) show a composition bias toward basic and acidic residues. Positions 144–206 (GTQRSVEVRE…EDTRAPVTRL (63 aa)) are disordered. Thr145 carries the phosphothreonine modification. A compositionally biased stretch (polar residues) spans 166-183 (TGTQQSLEAANQSGTQRS). Ser171 is modified (phosphoserine).

It belongs to the KHDC1 family. Component of the subcortical maternal complex (SCMC), at least composed of NLRP5, KHDC3L, OOEP, and TLE6. Within the complex, interacts with NLRP5, KHDC3L and TLE6. The SCMC may facilitate translocation of its components between the nuclear and cytoplasmic compartments. Forms a scaffold complex with OOEP/FLOPED, and interacts with BLM and TRIM25 at DNA replication forks. Interacts with PARP1; the interaction is increased following the formation of DNA double-strand breaks. Interacts with NUMA1.

It localises to the cytoplasm. The protein resides in the cell cortex. The protein localises to the nucleus. Its subcellular location is the mitochondrion. It is found in the cytoskeleton. It localises to the microtubule organizing center. The protein resides in the centrosome. The protein localises to the chromosome. Functionally, component of the subcortical maternal complex (SCMC), a multiprotein complex that plays a key role in early embryonic development. The SCMC complex is a structural constituent of cytoplasmic lattices, which consist in fibrous structures found in the cytoplasm of oocytes and preimplantation embryos. They are required to store maternal proteins critical for embryonic development, such as proteins that control epigenetic reprogramming of the preimplantation embryo, and prevent their degradation or activation. KHDC3 ensures proper spindle assembly by regulating the localization of AURKA via RHOA signaling and of PLK1 via a RHOA-independent process. Required for the localization of MAD2L1 to kinetochores to enable spindle assembly checkpoint function. As part of the OOEP-KHDC3 scaffold, recruits BLM and TRIM25 to DNA replication forks, thereby promoting the ubiquitination of BLM by TRIM25, enhancing BLM retainment at replication forks and therefore promoting stalled replication fork restart. Regulates homologous recombination-mediated DNA repair via recruitment of RAD51 to sites of DNA double-strand breaks, and sustainment of PARP1 activity, which in turn modulates downstream ATM or ATR activation. Activation of ATM or ATR in response to DNA double-strand breaks may be cell-type specific. Its role in DNA double-strand break repair is independent of its role in restarting stalled replication forks. Promotes neural stem cell neurogenesis and neuronal differentiation in the hippocampus. May regulate normal development of learning, memory and anxiety. Capable of binding RNA. The protein is KH domain-containing protein 3 (KHDC3L) of Macaca mulatta (Rhesus macaque).